Reading from the N-terminus, the 123-residue chain is WAP four-disulfide core domain protein 5 (123 aa).

The signal sequence occupies residues 1 to 24 (MRFGRLLLLAVLLAGVSQLPAVSG). WAP domains follow at residues 27 to 74 (KGEK…IPRV) and 75 to 121 (SVKL…RDPV). Disulfide bonds link Cys-34–Cys-62, Cys-41–Cys-66, Cys-49–Cys-61, Cys-55–Cys-70, Cys-81–Cys-109, Cys-88–Cys-113, Cys-96–Cys-108, and Cys-102–Cys-117.

The protein resides in the secreted. Its function is as follows. Putative acid-stable proteinase inhibitor. The chain is WAP four-disulfide core domain protein 5 (WFDC5) from Otolemur garnettii (Small-eared galago).